Reading from the N-terminus, the 101-residue chain is Cilia- and flagella-associated protein 141 (101 aa).

In terms of assembly, microtubule inner protein component of sperm flagellar doublet microtubules. In terms of tissue distribution, expressed in airway epithelial cells.

The protein localises to the cytoplasm. It is found in the cytoskeleton. Its subcellular location is the cilium axoneme. It localises to the flagellum axoneme. In terms of biological role, microtubule inner protein (MIP) part of the dynein-decorated doublet microtubules (DMTs) in cilia axoneme, which is required for motile cilia beating. In Homo sapiens (Human), this protein is Cilia- and flagella-associated protein 141.